The following is an 819-amino-acid chain: FYN-binding protein 1 (819 aa).

Polar residues predominate over residues 1 to 45; that stretch reads MAKFNTGSNPTEEAATSSRPFKVAGQSSPSGIQSRKNLFDNQGNA. The disordered stretch occupies residues 1 to 490; the sequence is MAKFNTGSNP…REKKEQELKK (490 aa). Position 3 is an N6-acetyllysine (K3). Phosphoserine occurs at positions 28 and 46. Positions 69–79 are enriched in basic and acidic residues; the sequence is TYEEKPEKEPK. Residues 150-160 are compositionally biased toward pro residues; that stretch reads GPKPGPAPPVP. S222 carries the post-translational modification Phosphoserine. Basic and acidic residues-rich tracts occupy residues 237–248 and 273–285; these read PPKEDPEDKDHG and NFEE…KTDL. At S318 the chain carries Phosphoserine. 2 stretches are compositionally biased toward pro residues: residues 342-351 and 380-412; these read GPPPPKPNRP and LPPP…PRNI. Positions 439–453 are enriched in acidic residues; sequence LEEEQESEGETYEDI. S445 bears the Phosphoserine mark. A coiled-coil region spans residues 448–495; sequence ETYEDIDSSKERDKKREKEEKKRLELERKEQKEREKKEQELKKKFKLT. Residues 454–489 are compositionally biased toward basic and acidic residues; that stretch reads DSSKERDKKREKEEKKRLELERKEQKEREKKEQELK. Positions 479 to 493 match the Nuclear localization signal motif; the sequence is KEREKKEQELKKKFK. Positions 499–560 constitute an SH3 1 domain; the sequence is QVIHHAKACC…KTTAVEIDYD (62 aa). The residue at position 559 (Y559) is a Phosphotyrosine. Phosphoserine occurs at positions 561 and 568. Residues 584–587 carry the SH2-binding; to LCP2 motif; that stretch reads YDDV. 2 disordered regions span residues 589–635 and 649–728; these read EQDA…DEKT and KDDR…EKEE. Residues 610–626 are compositionally biased toward acidic residues; that stretch reads TDDEIYDGIEEEDDDDG. The SH2-binding; to FYN signature appears at 615-618; the sequence is YDGI. The span at 649–664 shows a compositional bias: basic and acidic residues; that stretch reads KDDRKKSIREKPKVSE. Residues 668–677 show a composition bias toward polar residues; the sequence is NEGSSLPSQH. Residues 682–692 show a composition bias toward acidic residues; the sequence is VGEEVYDDVDA. A Phosphotyrosine modification is found at Y687. Residues 710-736 carry the Nuclear localization signal motif; it reads RAKTEEKDPKKLKKQEKEEKDLRKKFK. Basic and acidic residues predominate over residues 711–728; the sequence is AKTEEKDPKKLKKQEKEE. An SH3 2 domain is found at 736–804; it reads KYDGEIRVLY…LRSYLVDNDG (69 aa).

As to quaternary structure, part of a complex consisting of SKAP2, FYB1 and PTPNS1. Part of a complex consisting of SKAP2, FYB1 and PIRB. Part of a complex consisting of SKAP1, FYB1 and CLNK. Interacts with CLNK (via its SH2 domain); this interaction allows SKAP1 and FYB1 to recruit FYN to the complex, thus promoting the phosphorylation of CLNK by FYN. Interacts with FYN. Interacts with LCP2. Interacts with SKAP1. Interacts with SKAP2. Interacts with FASLG. Interacts with EVL. Interacts with TMEM47. Interacts with LCK. Post-translationally, T-cell receptor ligation leads to increased tyrosine phosphorylation. As to expression, expressed in hematopoietic tissues such as myeloid and T-cells, spleen and thymus. Not expressed in B-cells, nor in non-lymphoid tissues. FYB-130 is preferentially expressed in mature T-cells compared to FYB-120, whereas thymocytes showed a greater relative amount of FYB-120. Expressed in podocytes.

The protein resides in the cytoplasm. Its subcellular location is the nucleus. It is found in the cell junction. Acts as an adapter protein of the FYN and LCP2 signaling cascades in T-cells. May play a role in linking T-cell signaling to remodeling of the actin cytoskeleton. Modulates the expression of IL2. Involved in platelet activation. Prevents the degradation of SKAP1 and SKAP2. May be involved in high affinity immunoglobulin epsilon receptor signaling in mast cells. In Mus musculus (Mouse), this protein is FYN-binding protein 1 (Fyb1).